A 443-amino-acid chain; its full sequence is Probable glucomannan 4-beta-mannosyltransferase 11 (443 aa).

Asp52 is an active-site residue. Substrate-binding residues include Asp111 and Asp113. Residue Asp205 is part of the active site. 4 helical membrane-spanning segments follow: residues 284-304 (IIVHFFTFFFYCFILPTSVFF), 321-341 (ITLFNAIATPRSFYLVIFWVL), 400-420 (EMMVGIYILCCASYNLVFGKT), and 421-441 (VLYIYLYMQALAFIIAGIGFI).

Belongs to the glycosyltransferase 2 family. Plant cellulose synthase-like A subfamily.

It localises to the golgi apparatus membrane. It catalyses the reaction GDP-mannose + (glucomannan)n = GDP + (glucomannan)n+1.. Probable mannan synthase which consists of a 4-beta-mannosyltransferase activity on mannan using GDP-mannose. The beta-1,4-mannan product is the backbone for galactomannan synthesis by galactomannan galactosyltransferase. Galactomannan is a noncellulosic polysaccharides of plant cell wall. The sequence is that of Probable glucomannan 4-beta-mannosyltransferase 11 from Arabidopsis thaliana (Mouse-ear cress).